The sequence spans 369 residues: Transaldolase (369 aa).

K140 serves as the catalytic Schiff-base intermediate with substrate.

It belongs to the transaldolase family. Type 2 subfamily.

Its subcellular location is the cytoplasm. The catalysed reaction is D-sedoheptulose 7-phosphate + D-glyceraldehyde 3-phosphate = D-erythrose 4-phosphate + beta-D-fructose 6-phosphate. The protein operates within carbohydrate degradation; pentose phosphate pathway; D-glyceraldehyde 3-phosphate and beta-D-fructose 6-phosphate from D-ribose 5-phosphate and D-xylulose 5-phosphate (non-oxidative stage): step 2/3. Its function is as follows. Transaldolase is important for the balance of metabolites in the pentose-phosphate pathway. This Parafrankia sp. (strain EAN1pec) protein is Transaldolase.